A 281-amino-acid chain; its full sequence is Large ribosomal subunit protein uL2 (281 aa).

Residues 224–281 form a disordered region; sequence RGSAMNPNDHPHGGGEGHQPIGRKSPMTPWGKKALGVKTRKTKKASNQFIIRRRKESK.

This sequence belongs to the universal ribosomal protein uL2 family. In terms of assembly, part of the 50S ribosomal subunit. Forms a bridge to the 30S subunit in the 70S ribosome.

Its function is as follows. One of the primary rRNA binding proteins. Required for association of the 30S and 50S subunits to form the 70S ribosome, for tRNA binding and peptide bond formation. It has been suggested to have peptidyltransferase activity; this is somewhat controversial. Makes several contacts with the 16S rRNA in the 70S ribosome. The protein is Large ribosomal subunit protein uL2 of Metamycoplasma arthritidis (strain 158L3-1) (Mycoplasma arthritidis).